The sequence spans 379 residues: Glucose-1-phosphate adenylyltransferase (379 aa).

Alpha-D-glucose 1-phosphate-binding positions include Gly164, 179 to 180, and Ser190; that span reads EK.

The protein belongs to the bacterial/plant glucose-1-phosphate adenylyltransferase family. Homotetramer.

The catalysed reaction is alpha-D-glucose 1-phosphate + ATP + H(+) = ADP-alpha-D-glucose + diphosphate. It participates in glycan biosynthesis; glycogen biosynthesis. In terms of biological role, involved in the biosynthesis of ADP-glucose, a building block required for the elongation reactions to produce glycogen. Catalyzes the reaction between ATP and alpha-D-glucose 1-phosphate (G1P) to produce pyrophosphate and ADP-Glc. The chain is Glucose-1-phosphate adenylyltransferase from Lactiplantibacillus plantarum (strain ATCC BAA-793 / NCIMB 8826 / WCFS1) (Lactobacillus plantarum).